The primary structure comprises 109 residues: Tyrosine-protein phosphatase 16 (109 aa).

The 109-residue stretch at 1 to 109 folds into the Tyrosine-protein phosphatase domain; it reads WRMVTEHTST…RIKTQKPIVV (109 aa). Asp81 contributes to the substrate binding site.

This sequence belongs to the protein-tyrosine phosphatase family.

It catalyses the reaction O-phospho-L-tyrosyl-[protein] + H2O = L-tyrosyl-[protein] + phosphate. This chain is Tyrosine-protein phosphatase 16 (STY-16), found in Styela plicata (Wrinkled sea squirt).